The sequence spans 136 residues: uncharacterized protein (136 aa).

Residues 7 to 27 (ANVLAILLVSLFLINGLVFLS) form a helical membrane-spanning segment.

The protein localises to the membrane. This is an uncharacterized protein from Mycoplasma pneumoniae (strain ATCC 29342 / M129 / Subtype 1) (Mycoplasmoides pneumoniae).